Consider the following 488-residue polypeptide: Photosystem II CP43 reaction center protein (488 aa).

A propeptide spanning residues 1-29 is cleaved from the precursor; the sequence is MTKVFALGWLLKINLMKTLYSLRRFYHVE. The next 5 helical transmembrane spans lie at 84–108, 149–170, 193–215, 270–290, and 306–327; these read LFEV…PHLA, LIGP…RDKN, KALF…RFVS, KPFA…LSYS, and WYNN…ASQA. Residue Glu382 coordinates [CaMn4O5] cluster. The chain crosses the membrane as a helical span at residues 462–486; sequence RARAAAAGFEKGINRENEPVLSMRP.

This sequence belongs to the PsbB/PsbC family. PsbC subfamily. As to quaternary structure, PSII is composed of 1 copy each of membrane proteins PsbA, PsbB, PsbC, PsbD, PsbE, PsbF, PsbH, PsbI, PsbJ, PsbK, PsbL, PsbM, PsbT, PsbX, PsbY, PsbZ, Psb30/Ycf12, at least 3 peripheral proteins of the oxygen-evolving complex and a large number of cofactors. It forms dimeric complexes. It depends on Binds multiple chlorophylls and provides some of the ligands for the Ca-4Mn-5O cluster of the oxygen-evolving complex. It may also provide a ligand for a Cl- that is required for oxygen evolution. PSII binds additional chlorophylls, carotenoids and specific lipids. as a cofactor.

The protein resides in the plastid. It localises to the chloroplast thylakoid membrane. In terms of biological role, one of the components of the core complex of photosystem II (PSII). It binds chlorophyll and helps catalyze the primary light-induced photochemical processes of PSII. PSII is a light-driven water:plastoquinone oxidoreductase, using light energy to abstract electrons from H(2)O, generating O(2) and a proton gradient subsequently used for ATP formation. The sequence is that of Photosystem II CP43 reaction center protein from Pyropia yezoensis (Susabi-nori).